A 384-amino-acid polypeptide reads, in one-letter code: Ferrochelatase, mitochondrial (384 aa).

Cysteine 156 contacts [2Fe-2S] cluster. Residues histidine 190 and asparagine 343 contribute to the active site. Cysteine 363, cysteine 366, and cysteine 371 together coordinate [2Fe-2S] cluster.

The protein belongs to the ferrochelatase family. As to quaternary structure, homodimer. Homotetramer. [2Fe-2S] cluster is required as a cofactor.

It localises to the mitochondrion inner membrane. The catalysed reaction is heme b + 2 H(+) = protoporphyrin IX + Fe(2+). It participates in porphyrin-containing compound metabolism; protoheme biosynthesis; protoheme from protoporphyrin-IX: step 1/1. Catalyzes the ferrous insertion into protoporphyrin IX. Terminal enzyme in heme biosynthesis. Contains four conserved cysteines that function as cluster ligands and play a crucial role in maintaining protein structure. This Drosophila melanogaster (Fruit fly) protein is Ferrochelatase, mitochondrial.